We begin with the raw amino-acid sequence, 373 residues long: MGLDLARATRPLPELALAYFPNARSVDSDRDPGAGAVQCGDVAEVCSVTNDPDHGHIPVLLDRCVELLAPALTRTDPDGTEAVLVDATLGAGGHSERFLTDFPALRLIGLDRDPNALAIAGDRLAPFGDRVTLVRTRYDGITSALAEAGVRRIDGVLFDLGVSSMQLDQKQRGFSYSADAPLDMRMDPDALLTAAEIVNTYDAKTLTRILRDYGEERFAGRIADKIVRRRAKQPFTTTSELVELLYEAIPAPARRTGGHPAKRTFQALRIAVNAELDSLRAAIPAALAALRPGGRIVVMAYQSLEDRIVKQAFSTVTASRTPPGLPMELPGHEPEFVAVTRGAERADEQEIERNPRSAPVRLRALEKVGGRGS.

Residues 92–94 (GGH), Asp-111, Tyr-138, Asp-159, and Gln-166 contribute to the S-adenosyl-L-methionine site. 2 stretches are compositionally biased toward basic and acidic residues: residues 343–355 (AERA…ERNP) and 363–373 (RALEKVGGRGS). Residues 343-373 (AERADEQEIERNPRSAPVRLRALEKVGGRGS) form a disordered region.

The protein belongs to the methyltransferase superfamily. RsmH family.

The protein localises to the cytoplasm. It catalyses the reaction cytidine(1402) in 16S rRNA + S-adenosyl-L-methionine = N(4)-methylcytidine(1402) in 16S rRNA + S-adenosyl-L-homocysteine + H(+). Functionally, specifically methylates the N4 position of cytidine in position 1402 (C1402) of 16S rRNA. This is Ribosomal RNA small subunit methyltransferase H from Mycolicibacterium smegmatis (strain ATCC 700084 / mc(2)155) (Mycobacterium smegmatis).